The chain runs to 115 residues: Cytochrome c (115 aa).

Positions 26, 29, 30, and 91 each coordinate heme c.

The protein belongs to the cytochrome c family. Binds 1 heme c group covalently per subunit.

It is found in the mitochondrion intermembrane space. Functionally, electron carrier protein. The oxidized form of the cytochrome c heme group can accept an electron from the heme group of the cytochrome c1 subunit of cytochrome reductase. Cytochrome c then transfers this electron to the cytochrome oxidase complex, the final protein carrier in the mitochondrial electron-transport chain. This chain is Cytochrome c, found in Theileria annulata.